A 199-amino-acid chain; its full sequence is dITP/XTP pyrophosphatase (199 aa).

A substrate-binding site is contributed by 8–13; it reads THNRNK. Aspartate 68 functions as the Proton acceptor in the catalytic mechanism. Aspartate 68 is a binding site for Mg(2+). Substrate is bound by residues serine 69, 151 to 154, lysine 174, and 179 to 180; these read HGYD and HR.

Belongs to the HAM1 NTPase family. In terms of assembly, homodimer. Mg(2+) is required as a cofactor.

The enzyme catalyses XTP + H2O = XMP + diphosphate + H(+). The catalysed reaction is dITP + H2O = dIMP + diphosphate + H(+). It catalyses the reaction ITP + H2O = IMP + diphosphate + H(+). Functionally, pyrophosphatase that catalyzes the hydrolysis of nucleoside triphosphates to their monophosphate derivatives, with a high preference for the non-canonical purine nucleotides XTP (xanthosine triphosphate), dITP (deoxyinosine triphosphate) and ITP. Seems to function as a house-cleaning enzyme that removes non-canonical purine nucleotides from the nucleotide pool, thus preventing their incorporation into DNA/RNA and avoiding chromosomal lesions. The protein is dITP/XTP pyrophosphatase of Leifsonia xyli subsp. xyli (strain CTCB07).